The chain runs to 370 residues: MLSYETNARIQELRDKFENIKTTVDVDKIKEKLSRIEKELSDPSVWSDQRRAGKLGQQAQALRSQLDLLNKVQELFENIDIAVELSEEDESYLENLNELLKEAEDMVKEFELNILLSSPYDAYNAYLSVHPGAGGTESQDWASMLLRMYIRWAERNNYKVTTIEEQPGEEAGIKSATINIAGPYAYGKLKYEAGVHRLVRISPFDANHRRHTSFASVSVFPEMDDDVEIDIRPEDLKIDTYRAGGAGGQHVNRTESAVRITHIPTGIVVTCQNERSQHQNKATAMKILKAKLFELELEKKRQEKMKLMGEQKDIAWGNQIRSYVFQPYTMVKDHRTNYETGDVQAVMDGYIDDFIEKELLFFASIDEDKE.

At Q249 the chain carries N5-methylglutamine.

Belongs to the prokaryotic/mitochondrial release factor family. In terms of processing, methylated by PrmC. Methylation increases the termination efficiency of RF2.

Its subcellular location is the cytoplasm. Functionally, peptide chain release factor 2 directs the termination of translation in response to the peptide chain termination codons UGA and UAA. The protein is Peptide chain release factor 2 of Kosmotoga olearia (strain ATCC BAA-1733 / DSM 21960 / TBF 19.5.1).